Consider the following 157-residue polypeptide: Eukaryotic translation initiation factor 5A-1 (157 aa).

Ser2 bears the N-acetylserine mark. At Ser2 the chain carries Phosphoserine. Phosphothreonine occurs at positions 7 and 10. Lys51 is subject to Hypusine. Residue Ser74 is modified to Phosphoserine. A Glycyl lysine isopeptide (Lys-Gly) (interchain with G-Cter in ubiquitin) cross-link involves residue Lys86.

It belongs to the eIF-5A family. As to quaternary structure, homodimer. Binds to 80S ribosomes. Actively translating ribosomes show mutually exclusive binding of eIF5a (HYP2 or ANB1) and EFT1/eEF2. Interacts with DYS1 and LIA1. Lys-51 undergoes hypusination, a unique post-translational modification that consists in the addition of a butylamino group from spermidine to lysine side chain, leading to the formation of the unusual amino acid hypusine. eIF-5As are the only known proteins to undergo this modification, which is essential for their function.

It is found in the cytoplasm. Its function is as follows. Translation factor that promotes translation elongation and termination, particularly upon ribosome stalling at specific amino acid sequence contexts. Binds between the exit (E) and peptidyl (P) site of the ribosome and promotes rescue of stalled ribosome: specifically required for efficient translation of polyproline-containing peptides as well as other motifs that stall the ribosome. Acts as a ribosome quality control (RQC) cofactor by joining the RQC complex to facilitate peptidyl transfer during CAT tailing step. Involved in actin dynamics and cell cycle progression, mRNA decay and probably in a pathway involved in stress response and maintenance of cell wall integrity. This is Eukaryotic translation initiation factor 5A-1 (HYP2) from Saccharomyces cerevisiae (strain ATCC 204508 / S288c) (Baker's yeast).